A 546-amino-acid chain; its full sequence is Chaperonin GroEL 1 (546 aa).

ATP contacts are provided by residues 30–33 (TLGP), Lys51, 87–91 (DGTTT), Gly415, 479–481 (NAA), and Asp495.

It belongs to the chaperonin (HSP60) family. As to quaternary structure, forms a cylinder of 14 subunits composed of two heptameric rings stacked back-to-back. Interacts with the co-chaperonin GroES.

Its subcellular location is the cytoplasm. It catalyses the reaction ATP + H2O + a folded polypeptide = ADP + phosphate + an unfolded polypeptide.. In terms of biological role, together with its co-chaperonin GroES, plays an essential role in assisting protein folding. The GroEL-GroES system forms a nano-cage that allows encapsulation of the non-native substrate proteins and provides a physical environment optimized to promote and accelerate protein folding. This chain is Chaperonin GroEL 1, found in Paraburkholderia xenovorans (strain LB400).